The sequence spans 343 residues: N-acetyl-gamma-glutamyl-phosphate reductase (343 aa).

Residue C148 is part of the active site.

It belongs to the NAGSA dehydrogenase family. Type 1 subfamily.

The protein resides in the cytoplasm. The catalysed reaction is N-acetyl-L-glutamate 5-semialdehyde + phosphate + NADP(+) = N-acetyl-L-glutamyl 5-phosphate + NADPH + H(+). It participates in amino-acid biosynthesis; L-arginine biosynthesis; N(2)-acetyl-L-ornithine from L-glutamate: step 3/4. Functionally, catalyzes the NADPH-dependent reduction of N-acetyl-5-glutamyl phosphate to yield N-acetyl-L-glutamate 5-semialdehyde. This is N-acetyl-gamma-glutamyl-phosphate reductase from Caldicellulosiruptor bescii (strain ATCC BAA-1888 / DSM 6725 / KCTC 15123 / Z-1320) (Anaerocellum thermophilum).